The following is a 92-amino-acid chain: Small ribosomal subunit protein bS20 (92 aa).

The disordered stretch occupies residues 1–25 (MANSAQARKRARQAAKANSHNSALR).

The protein belongs to the bacterial ribosomal protein bS20 family.

Functionally, binds directly to 16S ribosomal RNA. This Paraburkholderia phymatum (strain DSM 17167 / CIP 108236 / LMG 21445 / STM815) (Burkholderia phymatum) protein is Small ribosomal subunit protein bS20.